A 362-amino-acid chain; its full sequence is Formyltransferase/hydrolase complex Fhc subunit B (362 aa).

Octaheteromer. Part of the formyltransferase/hydrolase complex fhc; composed of FhcA, FhcB, FhcC and FhcD.

The protein resides in the cytoplasm. Its pathway is one-carbon metabolism; formaldehyde degradation; formate from formaldehyde (H(4)MPT route): step 4/5. Its function is as follows. Involved in the transformation of 5-formyl tetrahydromethanopterin (5-formyl-H(4)MPT) to methanofuran (MFR) and formate via the formylmethanofuran (formyl-MFR). The protein is Formyltransferase/hydrolase complex Fhc subunit B (fhcB) of Methylorubrum extorquens (strain ATCC 14718 / DSM 1338 / JCM 2805 / NCIMB 9133 / AM1) (Methylobacterium extorquens).